The sequence spans 418 residues: Probable serine hydroxymethyltransferase (418 aa).

(6S)-5,6,7,8-tetrahydrofolate-binding positions include leucine 118 and 122–124 (GHL). The residue at position 226 (lysine 226) is an N6-(pyridoxal phosphate)lysine. 351-353 (SPF) contributes to the (6S)-5,6,7,8-tetrahydrofolate binding site.

The protein belongs to the SHMT family. As to quaternary structure, homodimer. It depends on pyridoxal 5'-phosphate as a cofactor.

The protein localises to the cytoplasm. The enzyme catalyses (6R)-5,10-methylene-5,6,7,8-tetrahydrofolate + glycine + H2O = (6S)-5,6,7,8-tetrahydrofolate + L-serine. Its pathway is one-carbon metabolism; tetrahydrofolate interconversion. Its function is as follows. Catalyzes the reversible interconversion of serine and glycine with tetrahydrofolate (THF) serving as the one-carbon carrier. This reaction serves as the major source of one-carbon groups required for the biosynthesis of purines, thymidylate, methionine, and other important biomolecules. This is Probable serine hydroxymethyltransferase from Mesomycoplasma hyopneumoniae (strain 7448) (Mycoplasma hyopneumoniae).